The primary structure comprises 332 residues: Glycerol-3-phosphate dehydrogenase [NAD(P)+] (332 aa).

NADPH-binding residues include Ser10, Trp11, His31, Arg32, and Lys105. 3 residues coordinate sn-glycerol 3-phosphate: Lys105, Gly136, and Ser138. Ala140 is an NADPH binding site. Sn-glycerol 3-phosphate is bound by residues Lys191, Asp244, Ser254, Arg255, and Asn256. Lys191 functions as the Proton acceptor in the catalytic mechanism. Residue Arg255 participates in NADPH binding. NADPH contacts are provided by Val279 and Glu281.

Belongs to the NAD-dependent glycerol-3-phosphate dehydrogenase family.

The protein resides in the cytoplasm. The catalysed reaction is sn-glycerol 3-phosphate + NAD(+) = dihydroxyacetone phosphate + NADH + H(+). The enzyme catalyses sn-glycerol 3-phosphate + NADP(+) = dihydroxyacetone phosphate + NADPH + H(+). It functions in the pathway membrane lipid metabolism; glycerophospholipid metabolism. Catalyzes the reduction of the glycolytic intermediate dihydroxyacetone phosphate (DHAP) to sn-glycerol 3-phosphate (G3P), the key precursor for phospholipid synthesis. The chain is Glycerol-3-phosphate dehydrogenase [NAD(P)+] from Prosthecochloris aestuarii (strain DSM 271 / SK 413).